The chain runs to 405 residues: Na(+)-translocating NADH-quinone reductase subunit F (405 aa).

Residues 3-23 (IILGIVMFTVIVLALALMILF) form a helical membrane-spanning segment. One can recognise a 2Fe-2S ferredoxin-type domain in the interval 32-124 (GDITIKVNDE…DMDIEVPEEV (93 aa)). Residues C67, C73, C76, and C108 each contribute to the [2Fe-2S] cluster site. The region spanning 127–267 (VKKWECTVIS…SGPFGEFFAK (141 aa)) is the FAD-binding FR-type domain.

Belongs to the NqrF family. In terms of assembly, composed of six subunits; NqrA, NqrB, NqrC, NqrD, NqrE and NqrF. [2Fe-2S] cluster is required as a cofactor. The cofactor is FAD.

It localises to the cell inner membrane. It carries out the reaction a ubiquinone + n Na(+)(in) + NADH + H(+) = a ubiquinol + n Na(+)(out) + NAD(+). In terms of biological role, NQR complex catalyzes the reduction of ubiquinone-1 to ubiquinol by two successive reactions, coupled with the transport of Na(+) ions from the cytoplasm to the periplasm. The first step is catalyzed by NqrF, which accepts electrons from NADH and reduces ubiquinone-1 to ubisemiquinone by a one-electron transfer pathway. This chain is Na(+)-translocating NADH-quinone reductase subunit F, found in Neisseria gonorrhoeae (strain ATCC 700825 / FA 1090).